The primary structure comprises 655 residues: Probable inactive receptor kinase At1g48480 (655 aa).

A signal peptide spans 1 to 32 (MRVFFFPNSSMAILSVFLSLLLLSLPLPSTQD). 6 LRR repeats span residues 71–95 (SNRV…IFGN), 98–120 (QLRT…LSTS), 122–144 (NLRH…LFSL), 146–169 (HLVR…TNLT), 170–192 (KLKT…DLPL), and 194–215 (QFNV…RFES). The tract at residues 234–260 (EETVPSQPTSGGNRTPPSVEGSEEKKK) is disordered. Residues 237 to 249 (VPSQPTSGGNRTP) show a composition bias toward polar residues. The helical transmembrane segment at 269-289 (IAGIVIGCVVGFALIVLILMV) threads the bilayer. Positions 371 to 646 (RASAEVLGKG…RKMENLRPYS (276 aa)) constitute a Protein kinase domain. The residue at position 373 (serine 373) is a Phosphoserine. 377–385 (LGKGTFGTA) is an ATP binding site. Threonine 394 carries the phosphothreonine modification. An ATP-binding site is contributed by lysine 399. Serine 450 is modified (phosphoserine). Phosphothreonine is present on threonine 526. A Phosphoserine modification is found at serine 546. Threonine 622 is modified (phosphothreonine).

The protein belongs to the protein kinase superfamily. Highly expressed in seedlings and leaves. Lower expression in roots, stems, flowers and siliques. Detected in the vascular tissues of roots, in the trichomes of young rosettes leaves and hydathodes, in the floral abscission zones, in filament apex and stomata cells of anthers, in inflorescence stems and in sepals.

It is found in the cell membrane. The protein is Probable inactive receptor kinase At1g48480 (RKL1) of Arabidopsis thaliana (Mouse-ear cress).